Here is a 519-residue protein sequence, read N- to C-terminus: Cytochrome P450 709B1 (519 aa).

A helical membrane pass occupies residues 1 to 21 (MGLVIFLALIVLILIIGLRIF). Cysteine 464 is a heme binding site.

The protein belongs to the cytochrome P450 family. Heme is required as a cofactor. Highly expressed in siliques.

It is found in the membrane. Involved in stress response. Does not function as cytokinin hydroxylase in yeast heterologous system. This is Cytochrome P450 709B1 from Arabidopsis thaliana (Mouse-ear cress).